The primary structure comprises 141 residues: Hemoglobin subunit alpha (141 aa).

The Globin domain maps to 1–141; the sequence is VLSAADKTNV…VSTVLTSKYR (141 aa). Phosphoserine is present on S3. Position 7 is an N6-succinyllysine (K7). T8 bears the Phosphothreonine mark. K11 bears the N6-succinyllysine mark. K16 is subject to N6-acetyllysine; alternate. An N6-succinyllysine; alternate modification is found at K16. Residue Y24 is modified to Phosphotyrosine. A Phosphoserine modification is found at S35. K40 carries the N6-succinyllysine modification. Phosphoserine is present on S49. Residue H58 coordinates O2. H87 is a heme b binding site. S102 is modified (phosphoserine). T108 carries the post-translational modification Phosphothreonine. Phosphoserine is present on residues S124 and S131. 2 positions are modified to phosphothreonine: T134 and T137. Residue S138 is modified to Phosphoserine.

The protein belongs to the globin family. Heterotetramer of two alpha chains and two beta chains. As to expression, red blood cells.

In terms of biological role, involved in oxygen transport from the lung to the various peripheral tissues. This chain is Hemoglobin subunit alpha, found in Tamiasciurus hudsonicus (American red squirrel).